A 159-amino-acid chain; its full sequence is Ribonuclease H (159 aa).

An RNase H type-1 domain is found at 1–145; the sequence is MTHIRAIYTD…CDLIARRLSR (145 aa). Mg(2+) is bound by residues Asp10, Glu49, Asp74, and Asp137.

It belongs to the RNase H family. In terms of assembly, monomer. Requires Mg(2+) as cofactor.

It is found in the cytoplasm. The catalysed reaction is Endonucleolytic cleavage to 5'-phosphomonoester.. In terms of biological role, endonuclease that specifically degrades the RNA of RNA-DNA hybrids. In Thermosynechococcus vestitus (strain NIES-2133 / IAM M-273 / BP-1), this protein is Ribonuclease H.